A 986-amino-acid polypeptide reads, in one-letter code: Anoctamin-1 (986 aa).

Residues 1 to 333 (MRVNEKYSTL…FGEKIGLYFA (333 aa)) lie on the Cytoplasmic side of the membrane. The tract at residues 79–121 (LVRRVQHSDTPSGARSVKQDHPLPGKGASLDAGSGEPPMDYHE) is disordered. Phosphoserine is present on residues serine 107 and serine 196. Residues 334-354 (WLGVYTQMLIPASIVGIIVFL) traverse the membrane as a helical segment. The Extracellular segment spans residues 355–406 (YGCATMDENIPSMEMCDQRHNITMCPLCDKTCSYWKMSSACATARASHLFDN). Disulfide bonds link cysteine 370–cysteine 395, cysteine 379–cysteine 862, cysteine 382–cysteine 386, and cysteine 651–cysteine 656. Residues 407–427 (PATVFFSVFMALWAATFMEHW) form a helical membrane-spanning segment. Glutamate 425 serves as a coordination point for Ca(2+). Residues 428–519 (KRKQMRLNYR…RDRFPAYLTN (92 aa)) are Cytoplasmic-facing. A helical transmembrane segment spans residues 520–540 (LVSIIFMIAVTFAIVLGVIIY). The Extracellular portion of the chain corresponds to 541 to 568 (RISMAAALAMNSSPSVRSNIRVTVTATA). Residues 569-589 (VIINLVVIILLDEVYGCIARW) traverse the membrane as a helical segment. Topologically, residues 590-607 (LTKIEVPKTEKSFEERLI) are cytoplasmic. The chain crosses the membrane as a helical span at residues 608 to 628 (FKAFLLKFVNSYTPIFYVAFF). Residues 629–657 (KGRFVGRPGDYVYIFRSFRMEECAPGGCL) lie on the Extracellular side of the membrane. Residues 658–678 (MELCIQLSIIMLGKQLIQNNL) form a helical membrane-spanning segment. Asparagine 677, glutamate 680, glutamate 728, glutamate 731, glutamate 760, and aspartate 764 together coordinate Ca(2+). The Cytoplasmic portion of the chain corresponds to 679–725 (FEIGIPKMKKLIRYLKLKQQSPPDHEECVKRKQRYEVDYNLEPFAGL). A run of 2 helical transmembrane segments spans residues 726 to 746 (TPEYMEMIIQFGFVTLFVASF) and 747 to 767 (PLAPLFALLNNIIEIRLDAKK). Over 768 to 784 (FVTELRRPVAVRAKDIG) the chain is Cytoplasmic. Residues 785-805 (IWYNILRGIGKLAVIINAFVI) form a helical membrane-spanning segment. The Extracellular segment spans residues 806–892 (SFTSDFIPRL…FWAVLAARLA (87 aa)). Residue asparagine 832 is glycosylated (N-linked (GlcNAc...) asparagine). The chain crosses the membrane as a helical span at residues 893–913 (FVIVFQNLVMFMSDFVDWVIP). Positions 909 and 914 each coordinate Ca(2+). Over 914-986 (DIPKDISQQI…PSHAYHGGVL (73 aa)) the chain is Cytoplasmic. Over residues 951–960 (KERQKDEPPC) the composition is skewed to basic and acidic residues. The disordered stretch occupies residues 951 to 986 (KERQKDEPPCNHHNTKACPDSLGSPAPSHAYHGGVL).

Belongs to the anoctamin family. Homodimer. Interacts with CFTR. Interacts with TRPV4. In terms of tissue distribution, expressed in nasal epithelial cells (at protein level). In the kidney, expressed in the collecting duct (at protein level). Broadly expressed with higher levels in liver, skeletal muscle and gastrointestinal muscles. Expressed in eccrine sweat glands.

Its subcellular location is the apical cell membrane. It is found in the presynapse. It carries out the reaction chloride(in) = chloride(out). With respect to regulation, ATP and calmodulin are essential for its activation. Channel activity is inhibited by CFTR protein and by chloride inhibitors such as niflumic acid (NFA) and 4,4'-diisothiocyanatostilbene-2,2'-disulfonic acid (DIDS). Activated by heat with activation seen at temperatures above 44 degrees Celsius. Activated by BDNF in radial glial cells. Calcium-activated chloride channel (CaCC). Plays a role in transepithelial anion transport and smooth muscle contraction. Required for the normal functioning of the interstitial cells of Cajal (ICCs) which generate electrical pacemaker activity in gastrointestinal smooth muscles. Acts as a major contributor to basal and stimulated chloride conductance in airway epithelial cells and plays an important role in tracheal cartilage development. Required for CFTR activation by enhancing endoplasmic reticulum Ca(2+) store release and is also required for CFTR membrane expression. Required for basal and ATP-dependent mucus secretion in airways and intestine, probably by controlling exocytosis of mucus-filled granules by providing Ca(2+) to an apical signaling compartment. Contributes to airway mucus expression induced by interleukins IL3 and IL8 and by the asthma-associated protein CLCA1 and is required for expression of mucin MUC5AC. However, was shown in another study not to be required for MUC5AC expression. Plays a role in the propagation of Ca(2+) waves in Kolliker's organ in the cochlea and contributes to the refinement of auditory brainstem circuitries prior to hearing onset. In vomeronasal sensory neurons, modulates spontaneous firing patterns in the absence of stimuli as well as the firing pattern of pheromone-evoked activity. Responsible for calcium-activated chloride channel activity in type I taste cells of the vallate papillae. Acts as a heat sensor in nociceptive neurons. In dorsal root ganglion neurons, plays a role in mediating non-histaminergic Mas-related G-protein coupled receptor (MRGPR)-dependent itching, acting as a downstream effector of MRGPRs. In the developing brain, required for the Ca(2+)-dependent process extension of radial glial cells. In terms of biological role, calcium-activated chloride channel (CaCC). Contributes to calcium-activated chloride secretion in human sweat gland epithelial cells. Shows increased basal chloride permeability and decreased Ca(2+)-induced chloride permeability. Its function is as follows. Calcium-activated chloride channel (CaCC). Shows increased sensitivity to intracellular Ca(2+). This is Anoctamin-1 (ANO1) from Homo sapiens (Human).